We begin with the raw amino-acid sequence, 1391 residues long: DNA-directed RNA polymerase subunit beta (1391 aa).

The protein belongs to the RNA polymerase beta chain family. As to quaternary structure, the RNAP catalytic core consists of 2 alpha, 1 beta, 1 beta' and 1 omega subunit. When a sigma factor is associated with the core the holoenzyme is formed, which can initiate transcription.

The enzyme catalyses RNA(n) + a ribonucleoside 5'-triphosphate = RNA(n+1) + diphosphate. Functionally, DNA-dependent RNA polymerase catalyzes the transcription of DNA into RNA using the four ribonucleoside triphosphates as substrates. The sequence is that of DNA-directed RNA polymerase subunit beta from Granulibacter bethesdensis (strain ATCC BAA-1260 / CGDNIH1).